The chain runs to 501 residues: Cytochrome P450 monooxygenase 76AD131 (501 aa).

Residues 1-21 (MGYYAIFAVVLPFLWTCFYLL) traverse the membrane as a helical segment. Residues asparagine 115 and asparagine 264 are each glycosylated (N-linked (GlcNAc...) asparagine). Residue cysteine 444 participates in heme binding.

The protein belongs to the cytochrome P450 family. It depends on heme as a cofactor. In terms of tissue distribution, highly expressed in aerial parts, in both skin and flesh tissues.

The protein resides in the membrane. The catalysed reaction is tyramine + reduced [NADPH--hemoprotein reductase] + O2 = dopamine + oxidized [NADPH--hemoprotein reductase] + H2O + H(+). It catalyses the reaction 3-methoxytyramine + reduced [NADPH--hemoprotein reductase] + O2 = 3,4-dihydroxy-5-methoxyphenethylamine + oxidized [NADPH--hemoprotein reductase] + H2O + H(+). It participates in aromatic compound metabolism. The protein operates within alkaloid biosynthesis. Its function is as follows. Cytochrome P450 monooxygenase participating in the biosynthesis of natural products derived from phenylethylamine, including mescaline, a natural hallucinogen potentially used in psychotherapeutic treatments. Catalyzes the hydroxylation of tyramine to dopamine and of 3-methoxytyramine to 3,4-dihydroxy-5-methoxyphenethylamine. The protein is Cytochrome P450 monooxygenase 76AD131 of Lophophora williamsii (Peyote).